The chain runs to 490 residues: Protein lag-3 (490 aa).

Disordered regions lie at residues 18–55 (PSVA…EDEP), 105–155 (EDEE…PTSE), 213–235 (SSAD…SPAE), 307–362 (SSSE…MQRI), and 391–490 (QQQQ…ANIN). Residues 105–119 (EDEERKRVEQQKNKE) show a composition bias toward basic and acidic residues. Polar residues predominate over residues 122–138 (NASTSAPTSSRNGGQSV). Residues 307-318 (SSSESPTKQSPM) are compositionally biased toward polar residues. 3 stretches are compositionally biased toward low complexity: residues 341 to 359 (QLQQ…QQEM), 391 to 404 (QQQQ…HHQM), and 413 to 456 (QAHQ…HHQM).

In terms of assembly, component of a complex consisting of at least a lin-12/Notch intracellular domain (NICD), lag-1, and lag-3. Interacts with a NICD of lin-12/Notch or glp-1/Notch; the interactions are direct. In terms of tissue distribution, expressed in the progenitor zone and the early pachytene region of the hermaphrodite gonad.

Its subcellular location is the nucleus. Functionally, glp-1/Notch and lin-12/Notch proteins promote signaling by recruiting lag-3 to target promoters, where it functions as a transcriptional activator, probably as part of a complex with a Notch intracellular domain (NICD) and the transcription regulator lag-1. Involved in the p53-mediated germ-cell apoptotic response to DNA damage, perhaps acting as a transcriptional activator. May regulate phosphatase lip-1 mRNA transcription downstream of glp-1. This chain is Protein lag-3 (sel-8), found in Caenorhabditis elegans.